Here is a 151-residue protein sequence, read N- to C-terminus: Endoribonuclease YbeY (151 aa).

Residues His-114, His-118, and His-124 each coordinate Zn(2+).

The protein belongs to the endoribonuclease YbeY family. Requires Zn(2+) as cofactor.

The protein resides in the cytoplasm. Functionally, single strand-specific metallo-endoribonuclease involved in late-stage 70S ribosome quality control and in maturation of the 3' terminus of the 16S rRNA. The chain is Endoribonuclease YbeY from Hamiltonella defensa subsp. Acyrthosiphon pisum (strain 5AT).